Consider the following 162-residue polypeptide: Beta-lactoglobulin-1 (162 aa).

Disulfide bonds link Cys66-Cys160 and Cys106-Cys119.

The protein belongs to the calycin superfamily. Lipocalin family. Monomer. As to expression, synthesized in mammary gland and secreted in milk.

The protein resides in the secreted. In terms of biological role, primary component of whey, it binds retinol and is probably involved in the transport of that molecule. The protein is Beta-lactoglobulin-1 (LGB1) of Equus asinus (Donkey).